A 407-amino-acid polypeptide reads, in one-letter code: MLYLVGFLLATVCLLVLGVNVWVLIDHFLTIDVPPSIPHPVKFRILHFCFHLTTTWGHILEKMNICSMPQFFCFLQDSLSSKENHGVFVKDLRFGTIPVRLFRPKAASSKPRRGILFFHGGGAMIGSLDSHHNLCTFLARETDSVLVSVGYRKLPYYHHPSLYHDCINASIHFLKSLKAYGIDPSRVVICGESIGGAAAVVVTQTLLSRTDIPKIRAQVLIYPILQAFYFQSPSHLMHKNIPFLTKDFMITCICKYLAIDFSWKDAMLTGACISPSAWKKYEKWLSPDNIPKRFRTTYQPPESPAPFNEAAYLETKHAMNIDISPLVADDKIIAQLPEAFLVSLHWDIIRDDVLLYKKRLEDQGVPVTWHHVEDGFHGCILLFDKKLFSFPCSLNIVNAVVSYIKDL.

At 1–4 the chain is on the cytoplasmic side; it reads MLYL. A helical; Signal-anchor for type II membrane protein membrane pass occupies residues 5 to 25; the sequence is VGFLLATVCLLVLGVNVWVLI. The Lumenal portion of the chain corresponds to 26–407; the sequence is DHFLTIDVPP…NAVVSYIKDL (382 aa). The Involved in the stabilization of the negatively charged intermediate by the formation of the oxyanion hole motif lies at 119-121; it reads HGG. N-linked (GlcNAc...) asparagine glycosylation is present at Asn168. Active-site residues include Ser193, Asp347, and His377.

Belongs to the 'GDXG' lipolytic enzyme family.

The protein localises to the membrane. This chain is Arylacetamide deacetylase-like 4 family member 1, found in Mus musculus (Mouse).